Reading from the N-terminus, the 308-residue chain is Testis-expressed protein 52 (308 aa).

As to expression, expressed in Testis.

The protein is Testis-expressed protein 52 of Mus musculus (Mouse).